Here is a 185-residue protein sequence, read N- to C-terminus: Peptidyl-tRNA hydrolase (185 aa).

TRNA is bound at residue Y14. The Proton acceptor role is filled by H19. The tRNA site is built by Y65, N67, and N113.

This sequence belongs to the PTH family. As to quaternary structure, monomer.

The protein localises to the cytoplasm. The enzyme catalyses an N-acyl-L-alpha-aminoacyl-tRNA + H2O = an N-acyl-L-amino acid + a tRNA + H(+). Functionally, hydrolyzes ribosome-free peptidyl-tRNAs (with 1 or more amino acids incorporated), which drop off the ribosome during protein synthesis, or as a result of ribosome stalling. Its function is as follows. Catalyzes the release of premature peptidyl moieties from peptidyl-tRNA molecules trapped in stalled 50S ribosomal subunits, and thus maintains levels of free tRNAs and 50S ribosomes. In Rickettsia prowazekii (strain Madrid E), this protein is Peptidyl-tRNA hydrolase.